The sequence spans 501 residues: Glutamate--tRNA ligase (501 aa).

The 'HIGH' region motif lies at 21 to 31 (PSPTGTPHVGL). The 'KMSKS' region signature appears at 266 to 270 (KLSKR). Residue K269 participates in ATP binding.

Belongs to the class-I aminoacyl-tRNA synthetase family. Glutamate--tRNA ligase type 1 subfamily. In terms of assembly, monomer.

It is found in the cytoplasm. It catalyses the reaction tRNA(Glu) + L-glutamate + ATP = L-glutamyl-tRNA(Glu) + AMP + diphosphate. In terms of biological role, catalyzes the attachment of glutamate to tRNA(Glu) in a two-step reaction: glutamate is first activated by ATP to form Glu-AMP and then transferred to the acceptor end of tRNA(Glu). The protein is Glutamate--tRNA ligase of Kineococcus radiotolerans (strain ATCC BAA-149 / DSM 14245 / SRS30216).